We begin with the raw amino-acid sequence, 345 residues long: Phosphoribosylformylglycinamidine cyclo-ligase (345 aa).

This sequence belongs to the AIR synthase family.

It is found in the cytoplasm. It carries out the reaction 2-formamido-N(1)-(5-O-phospho-beta-D-ribosyl)acetamidine + ATP = 5-amino-1-(5-phospho-beta-D-ribosyl)imidazole + ADP + phosphate + H(+). It participates in purine metabolism; IMP biosynthesis via de novo pathway; 5-amino-1-(5-phospho-D-ribosyl)imidazole from N(2)-formyl-N(1)-(5-phospho-D-ribosyl)glycinamide: step 2/2. The protein is Phosphoribosylformylglycinamidine cyclo-ligase of Pasteurella multocida (strain Pm70).